Consider the following 164-residue polypeptide: Biotin carboxyl carrier protein of acetyl-CoA carboxylase (164 aa).

Positions Gly-86–Val-162 constitute a Biotinyl-binding domain. An N6-biotinyllysine modification is found at Lys-128.

As to quaternary structure, homodimer.

It functions in the pathway lipid metabolism; fatty acid biosynthesis. This protein is a component of the acetyl coenzyme A carboxylase complex; first, biotin carboxylase catalyzes the carboxylation of the carrier protein and then the transcarboxylase transfers the carboxyl group to form malonyl-CoA. This is Biotin carboxyl carrier protein of acetyl-CoA carboxylase (accB) from Chlamydia trachomatis serovar D (strain ATCC VR-885 / DSM 19411 / UW-3/Cx).